A 365-amino-acid chain; its full sequence is Pyridoxal reductase, chloroplastic (365 aa).

A chloroplast-targeting transit peptide spans 1 to 15 (MALTLSTTKTFTNIN). Tyr-94 serves as the catalytic Proton donor.

It belongs to the aldo/keto reductase family. In terms of assembly, monomer. In terms of tissue distribution, expressed in cotyledons, embryos, flowers, shoots, roots and seeds.

The protein localises to the plastid. The protein resides in the chloroplast. It catalyses the reaction pyridoxine + NADP(+) = pyridoxal + NADPH + H(+). Its pathway is cofactor degradation; B6 vitamer degradation; pyridoxal from pyridoxine (dehydrogenase route): step 1/1. In terms of biological role, catalyzes the reduction of pyridoxal (PL) with NADPH and oxidation of pyridoxine (PN) with NADP(+). Involved in the PLP salvage pathway. The sequence is that of Pyridoxal reductase, chloroplastic (PLR1) from Arabidopsis thaliana (Mouse-ear cress).